The following is a 421-amino-acid chain: ATP-dependent RNA helicase RhlB (421 aa).

Residues 9-37 (QKFSDFALHPVVVQALEKKGFYNCTPIQA) carry the Q motif motif. One can recognise a Helicase ATP-binding domain in the interval 40-219 (LPLTLAGRDV…FEQMNNAEYV (180 aa)). 53–60 (AQTGTGKT) contacts ATP. The short motif at 165-168 (DEAD) is the DEAD box element. Residues 245-390 (RLLQTLIEEE…VSKYNPDALL (146 aa)) form the Helicase C-terminal domain. The disordered stretch occupies residues 390 to 421 (LSELPPPKRLSRPRTGNGPRRSGAPRNRRRTG). Residues 405-414 (GNGPRRSGAP) show a composition bias toward low complexity.

It belongs to the DEAD box helicase family. RhlB subfamily. In terms of assembly, component of the RNA degradosome, which is a multiprotein complex involved in RNA processing and mRNA degradation.

It localises to the cytoplasm. The enzyme catalyses ATP + H2O = ADP + phosphate + H(+). In terms of biological role, DEAD-box RNA helicase involved in RNA degradation. Has RNA-dependent ATPase activity and unwinds double-stranded RNA. This chain is ATP-dependent RNA helicase RhlB, found in Cronobacter sakazakii (strain ATCC BAA-894) (Enterobacter sakazakii).